The primary structure comprises 231 residues: Ubiquinone biosynthesis protein coq-4, mitochondrial (231 aa).

H133, D134, H137, and E149 together coordinate Zn(2+).

It belongs to the COQ4 family. In terms of assembly, component of a multi-subunit COQ enzyme complex. Requires Zn(2+) as cofactor.

The protein localises to the mitochondrion inner membrane. The enzyme catalyses a 4-hydroxy-3-methoxy-5-(all-trans-polyprenyl)benzoate + H(+) = a 2-methoxy-6-(all-trans-polyprenyl)phenol + CO2. It functions in the pathway cofactor biosynthesis; ubiquinone biosynthesis. Functionally, lyase that catalyzes the C1-decarboxylation of 4-hydroxy-3-methoxy-5-(all-trans-polyprenyl)benzoic acid into 2-methoxy-6-(all-trans-polyprenyl)phenol during ubiquinone biosynthesis. This is Ubiquinone biosynthesis protein coq-4, mitochondrial from Caenorhabditis elegans.